A 648-amino-acid polypeptide reads, in one-letter code: Macrolide export ATP-binding/permease protein MacB (648 aa).

One can recognise an ABC transporter domain in the interval 5-243; sequence LELKDIRRSY…AGGTEPVVNT (239 aa). 41-48 is an ATP binding site; it reads GASGSGKS. Helical transmembrane passes span 273-293, 523-543, 576-596, and 600-620; these read LLTMLGIIIGIASVVSIVVVG, LFLTLVAVISLVVGGIGVMNI, AVLVCLVGGALGITLSLLIAF, and LFLPGWEIGFSPLALLLAFLC.

The protein belongs to the ABC transporter superfamily. Macrolide exporter (TC 3.A.1.122) family. In terms of assembly, homodimer. Part of the tripartite efflux system MacAB-TolC, which is composed of an inner membrane transporter, MacB, a periplasmic membrane fusion protein, MacA, and an outer membrane component, TolC. The complex forms a large protein conduit and can translocate molecules across both the inner and outer membranes. Interacts with MacA.

The protein resides in the cell inner membrane. Part of the tripartite efflux system MacAB-TolC. MacB is a non-canonical ABC transporter that contains transmembrane domains (TMD), which form a pore in the inner membrane, and an ATP-binding domain (NBD), which is responsible for energy generation. Confers resistance against macrolides. The polypeptide is Macrolide export ATP-binding/permease protein MacB (Shigella boydii serotype 4 (strain Sb227)).